Here is a 271-residue protein sequence, read N- to C-terminus: Phosphatidylglycerol--prolipoprotein diacylglyceryl transferase (271 aa).

4 helical membrane-spanning segments follow: residues 18–38, 51–71, 89–109, and 115–135; these read LSVHWYGIIIGAGALLGLWMA, IFIDLVLFAIPIAIICARAYY, IWKGGIAIHGGLIGAIATGIV, and GISFWKLADIAAPSILLGQAI. Arginine 137 provides a ligand contact to a 1,2-diacyl-sn-glycero-3-phospho-(1'-sn-glycerol). Transmembrane regions (helical) follow at residues 177–197, 205–225, and 236–256; these read HPTFLYESLWSFAGVVILLLL, GNLFLTYVIWYSIGRYFIEGM, and LRIAQVISIVLIVLAIILMIF.

This sequence belongs to the Lgt family.

Its subcellular location is the cell membrane. It catalyses the reaction L-cysteinyl-[prolipoprotein] + a 1,2-diacyl-sn-glycero-3-phospho-(1'-sn-glycerol) = an S-1,2-diacyl-sn-glyceryl-L-cysteinyl-[prolipoprotein] + sn-glycerol 1-phosphate + H(+). Its pathway is protein modification; lipoprotein biosynthesis (diacylglyceryl transfer). In terms of biological role, catalyzes the transfer of the diacylglyceryl group from phosphatidylglycerol to the sulfhydryl group of the N-terminal cysteine of a prolipoprotein, the first step in the formation of mature lipoproteins. This is Phosphatidylglycerol--prolipoprotein diacylglyceryl transferase from Bacillus velezensis (strain DSM 23117 / BGSC 10A6 / LMG 26770 / FZB42) (Bacillus amyloliquefaciens subsp. plantarum).